We begin with the raw amino-acid sequence, 275 residues long: ATP synthase subunit delta (275 aa).

This sequence belongs to the ATPase delta chain family. In terms of assembly, F-type ATPases have 2 components, F(1) - the catalytic core - and F(0) - the membrane proton channel. F(1) has five subunits: alpha(3), beta(3), gamma(1), delta(1), epsilon(1). F(0) has three main subunits: a(1), b(2) and c(10-14). The alpha and beta chains form an alternating ring which encloses part of the gamma chain. F(1) is attached to F(0) by a central stalk formed by the gamma and epsilon chains, while a peripheral stalk is formed by the delta and b chains.

It is found in the cell membrane. F(1)F(0) ATP synthase produces ATP from ADP in the presence of a proton or sodium gradient. F-type ATPases consist of two structural domains, F(1) containing the extramembraneous catalytic core and F(0) containing the membrane proton channel, linked together by a central stalk and a peripheral stalk. During catalysis, ATP synthesis in the catalytic domain of F(1) is coupled via a rotary mechanism of the central stalk subunits to proton translocation. Its function is as follows. This protein is part of the stalk that links CF(0) to CF(1). It either transmits conformational changes from CF(0) to CF(1) or is implicated in proton conduction. The polypeptide is ATP synthase subunit delta (Arthrobacter sp. (strain FB24)).